A 101-amino-acid chain; its full sequence is MKPNFSKGLIPAIVIEEGTKEVLMLAYMNEDAYEKTLETKRTWFYSRSRQSLWNKGETSGNVQYVQSLYLDCDQDSIVVNVKQVGPACHTGEKTCFHYQII.

Asp-71 contributes to the Mg(2+) binding site. A Zn(2+)-binding site is contributed by Cys-72. Positions 73 and 75 each coordinate Mg(2+). Positions 88 and 95 each coordinate Zn(2+).

Belongs to the PRA-CH family. Homodimer. Mg(2+) serves as cofactor. It depends on Zn(2+) as a cofactor.

The protein localises to the cytoplasm. It catalyses the reaction 1-(5-phospho-beta-D-ribosyl)-5'-AMP + H2O = 1-(5-phospho-beta-D-ribosyl)-5-[(5-phospho-beta-D-ribosylamino)methylideneamino]imidazole-4-carboxamide. It participates in amino-acid biosynthesis; L-histidine biosynthesis; L-histidine from 5-phospho-alpha-D-ribose 1-diphosphate: step 3/9. In terms of biological role, catalyzes the hydrolysis of the adenine ring of phosphoribosyl-AMP. The sequence is that of Phosphoribosyl-AMP cyclohydrolase from Bacillus cereus (strain G9842).